Here is a 419-residue protein sequence, read N- to C-terminus: G-protein coupled receptor 151 (419 aa).

Topologically, residues 1 to 41 (MLAAAFADSNSSSMNVSFAHLHFAGGYLPSDSQDWRTIIPA) are extracellular. Asparagine 10 and asparagine 15 each carry an N-linked (GlcNAc...) asparagine glycan. A helical transmembrane segment spans residues 42-62 (LLVAVCLVGFVGNLCVIGILL). Residues 63–71 (HNAWKGKPS) lie on the Cytoplasmic side of the membrane. Residues 72–92 (MIHSLILNLSLADLSLLLFSA) form a helical membrane-spanning segment. Residues 93 to 116 (PIRATAYSKSVWDLGWFVCKSSDW) lie on the Extracellular side of the membrane. An intrachain disulfide couples cysteine 111 to cysteine 187. The chain crosses the membrane as a helical span at residues 117 to 137 (FIHTCMAAKSLTIVVVAKVCF). The Cytoplasmic segment spans residues 138–153 (MYASDPAKQVSIHNYT). Residues 154 to 174 (IWSVLVAIWTVASLLPLPEWF) traverse the membrane as a helical segment. Over 175 to 201 (FSTIRHHEGVEMCLVDVPAVAEEFMSM) the chain is Extracellular. A helical transmembrane segment spans residues 202–222 (FGKLYPLLAFGLPLFFASFYF). The Cytoplasmic segment spans residues 223–252 (WRAYDQCKKRGTKTQNLRNQIRSKQVTVML). A helical membrane pass occupies residues 253-273 (LSIAIISALLWLPEWVAWLWV). At 274-286 (WHLKAAGPAPPQG) the chain is on the extracellular side. The chain crosses the membrane as a helical span at residues 287-307 (FIALSQVLMFSISSANPLIFL). At 308–419 (VMSEEFREGL…EDQETGEGVK (112 aa)) the chain is on the cytoplasmic side. Residues 330 to 419 (PTVSESQETP…EDQETGEGVK (90 aa)) form a disordered region. Polar residues predominate over residues 332 to 341 (VSESQETPAG). Over residues 410–419 (EDQETGEGVK) the composition is skewed to acidic residues.

It belongs to the G-protein coupled receptor 1 family. In terms of tissue distribution, high expression in the spinal cord.

It localises to the cell membrane. Functionally, proton-sensing G-protein coupled receptor. The protein is G-protein coupled receptor 151 (GPR151) of Homo sapiens (Human).